The sequence spans 102 residues: Small ribosomal subunit protein uS10 (102 aa).

The protein belongs to the universal ribosomal protein uS10 family. Part of the 30S ribosomal subunit.

Functionally, involved in the binding of tRNA to the ribosomes. This is Small ribosomal subunit protein uS10 from Pelotomaculum thermopropionicum (strain DSM 13744 / JCM 10971 / SI).